The following is a 473-amino-acid chain: Pre-mRNA-splicing factor prp5 (473 aa).

WD repeat units lie at residues 161-191 (GHLG…KIWD), 203-233 (GHIA…KCWD), 245-275 (GHLS…RVWD), 287-317 (GHKS…RLWD), 329-358 (HHKK…KHWK), 370-399 (GHNA…CFWD), and 419-449 (DSEA…KIYK).

Belongs to the WD repeat PRL1/PRL2 family. In terms of assembly, belongs to the 40S cdc5-associated complex (or cwf complex), a spliceosome sub-complex reminiscent of a late-stage spliceosome composed of the U2, U5 and U6 snRNAs and at least brr2, cdc5, cwf2/prp3, cwf3/syf1, cwf4/syf3, cwf5/ecm2, spp42/cwf6, cwf7/spf27, cwf8, cwf9, cwf10, cwf11, cwf12, prp45/cwf13, cwf14, cwf15, cwf16, cwf17, cwf18, cwf19, cwf20, cwf21, cwf22, cwf23, cwf24, cwf25, cwf26, cyp7/cwf27, cwf28, cwf29/ist3, lea1, msl1, prp5/cwf1, prp10, prp12/sap130, prp17, prp22, sap61, sap62, sap114, sap145, slu7, smb1, smd1, smd3, smf1, smg1 and syf2.

It localises to the nucleus. In terms of biological role, required for both cell cycle progression at G2/M and pre-mRNA splicing. Interacts genetically with the PRP4 kinase. In Schizosaccharomyces pombe (strain 972 / ATCC 24843) (Fission yeast), this protein is Pre-mRNA-splicing factor prp5 (prp5).